The sequence spans 517 residues: Maturase K (517 aa).

It belongs to the intron maturase 2 family. MatK subfamily.

The protein localises to the plastid. Its subcellular location is the chloroplast. Functionally, usually encoded in the trnK tRNA gene intron. Probably assists in splicing its own and other chloroplast group II introns. The protein is Maturase K of Caryota mitis (Burmese fishtail palm).